The sequence spans 1134 residues: TBC1 domain family member 8 (1134 aa).

2 GRAM domains span residues 145–212 (VKFE…ERTS) and 285–353 (EFFR…EKME). The tract at residues 433-466 (ASQSSEEREEKRPLPHPEPLTAVFQQSGSQSPDS) is disordered. The segment covering 437 to 447 (SEEREEKRPLP) has biased composition (basic and acidic residues). Over residues 455–466 (VFQQSGSQSPDS) the composition is skewed to polar residues. The Rab-GAP TBC domain occupies 504–691 (GIPESLRGRL…HVVDCFFYDG (188 aa)). The disordered stretch occupies residues 1034-1070 (SSSGSCSQECEEPQASAPPEQDSVFAEAGKSPQAFPE).

Its function is as follows. May act as a GTPase-activating protein for Rab family protein(s). The sequence is that of TBC1 domain family member 8 (Tbc1d8) from Mus musculus (Mouse).